A 120-amino-acid chain; its full sequence is Myohemerythrin (120 aa).

The Fe cation site is built by H26, H56, E60, H75, H79, H108, and D113.

It belongs to the hemerythrin family.

Functionally, myohemerythrin is an oxygen-binding protein found in the retractor muscles of certain worms. The oxygen-binding site contains two iron atoms. In Sipunculus nudus (Sipunculan worm), this protein is Myohemerythrin.